Here is a 180-residue protein sequence, read N- to C-terminus: UPF0340 protein LL0489 (180 aa).

It belongs to the UPF0340 family.

The protein is UPF0340 protein LL0489 (yeiF) of Lactococcus lactis subsp. lactis (strain IL1403) (Streptococcus lactis).